A 64-amino-acid chain; its full sequence is Sulfur carrier protein ThiS (64 aa).

Gly64 is subject to 1-thioglycine; alternate. A Glycyl adenylate; alternate modification is found at Gly64. Gly64 is covalently cross-linked (Glycyl cysteine thioester (Gly-Cys) (interchain with C-192 in TtuC); alternate).

It belongs to the sulfur carrier protein ThiS family. Post-translationally, C-terminal thiocarboxylation occurs in 2 steps, it is first acyl-adenylated (-COAMP) by TtuC, then thiocarboxylated (-COSH) by the cysteine desulfurases IscS or SufS.

It functions in the pathway cofactor biosynthesis; thiamine diphosphate biosynthesis. Is the sulfur donor in the synthesis of the thiazole phosphate moiety of thiamine phosphate. This Thermus thermophilus (strain ATCC BAA-163 / DSM 7039 / HB27) protein is Sulfur carrier protein ThiS.